The following is a 358-amino-acid chain: Gap junction alpha-5 protein (358 aa).

Over 1 to 19 (MGDWSFLGEFLEEVHKHST) the chain is Cytoplasmic. Residues 20 to 40 (VIGKVWLTVLFIFRMLVLGTA) traverse the membrane as a helical segment. Residues 41-76 (AESSWGDEQADFQCDTMQPGCGNVCYDQAFPISHIR) are Extracellular-facing. The helical transmembrane segment at 77–97 (YWVLQIIFVSTPSLVYMGHAM) threads the bilayer. At 98–164 (HTVRMQEKRK…CSILIRTTME (67 aa)) the chain is on the cytoplasmic side. A helical transmembrane segment spans residues 165-185 (VAFIVGQYLLYGIFLDTLHVC). At 186-205 (RRSPCPHPVNCYVSRPTEKN) the chain is on the extracellular side. The helical transmembrane segment at 206-226 (VFIVFMLAVAALSLFLSLAEL) threads the bilayer. Residues 227-358 (YHLGWKKLRQ…SKARSDDLSV (132 aa)) are Cytoplasmic-facing. The interval 318–358 (AQKPEVPNGASPGHRLPHGYQSDKRRLSKASSKARSDDLSV) is disordered. Ser353 and Ser357 each carry phosphoserine.

It belongs to the connexin family. Alpha-type (group II) subfamily. In terms of assembly, a connexon is composed of a hexamer of connexins.

It is found in the cell membrane. Its subcellular location is the cell junction. The protein localises to the gap junction. Functionally, one gap junction consists of a cluster of closely packed pairs of transmembrane channels, the connexons, through which materials of low MW diffuse from one cell to a neighboring cell. The chain is Gap junction alpha-5 protein (GJA5) from Canis lupus familiaris (Dog).